We begin with the raw amino-acid sequence, 140 residues long: Cystatin-C (140 aa).

Positions 1–20 are cleaved as a signal peptide; sequence MASPLRSLLFLLAVLAVAWA. The short motif at 75–79 is the Secondary area of contact element; it reads QLVAG. Disulfide bonds link cysteine 93–cysteine 103 and cysteine 117–cysteine 137.

Belongs to the cystatin family.

The protein localises to the secreted. Its function is as follows. As an inhibitor of cysteine proteinases, this protein is thought to serve an important physiological role as a local regulator of this enzyme activity. This chain is Cystatin-C (Cst3), found in Mus musculus (Mouse).